Here is a 308-residue protein sequence, read N- to C-terminus: tRNA dimethylallyltransferase (308 aa).

ATP is bound at residue 9-16 (GPTAVGKT). Residue 11–16 (TAVGKT) coordinates substrate. Residues 34–37 (DSMQ) form an interaction with substrate tRNA region.

The protein belongs to the IPP transferase family. In terms of assembly, monomer. Mg(2+) serves as cofactor.

It carries out the reaction adenosine(37) in tRNA + dimethylallyl diphosphate = N(6)-dimethylallyladenosine(37) in tRNA + diphosphate. Catalyzes the transfer of a dimethylallyl group onto the adenine at position 37 in tRNAs that read codons beginning with uridine, leading to the formation of N6-(dimethylallyl)adenosine (i(6)A). The polypeptide is tRNA dimethylallyltransferase (Lactobacillus delbrueckii subsp. bulgaricus (strain ATCC 11842 / DSM 20081 / BCRC 10696 / JCM 1002 / NBRC 13953 / NCIMB 11778 / NCTC 12712 / WDCM 00102 / Lb 14)).